Reading from the N-terminus, the 165-residue chain is Cyclic pyranopterin monophosphate synthase (165 aa).

Substrate contacts are provided by residues 76 to 78 (MCH) and 113 to 114 (IE). The active site involves aspartate 128.

Belongs to the MoaC family. In terms of assembly, homohexamer; trimer of dimers.

The enzyme catalyses (8S)-3',8-cyclo-7,8-dihydroguanosine 5'-triphosphate = cyclic pyranopterin phosphate + diphosphate. It functions in the pathway cofactor biosynthesis; molybdopterin biosynthesis. In terms of biological role, catalyzes the conversion of (8S)-3',8-cyclo-7,8-dihydroguanosine 5'-triphosphate to cyclic pyranopterin monophosphate (cPMP). This is Cyclic pyranopterin monophosphate synthase from Limosilactobacillus fermentum (strain NBRC 3956 / LMG 18251) (Lactobacillus fermentum).